Here is a 418-residue protein sequence, read N- to C-terminus: Nucleoredoxin (418 aa).

Residues Lys-109–Gly-309 enclose the Thioredoxin domain.

This sequence belongs to the nucleoredoxin family.

Its subcellular location is the cytoplasm. It localises to the cytosol. The protein resides in the nucleus. It carries out the reaction [protein]-dithiol + NAD(+) = [protein]-disulfide + NADH + H(+). The enzyme catalyses [protein]-dithiol + NADP(+) = [protein]-disulfide + NADPH + H(+). Functionally, functions as a redox-dependent negative regulator of the Wnt signaling pathway. The chain is Nucleoredoxin (nxn) from Danio rerio (Zebrafish).